The following is a 417-amino-acid chain: Zinc finger protein CONSTANS-LIKE 16 (417 aa).

The Zn(2+) site is built by C17, C20, C40, and H45. A B box-type; atypical zinc finger spans residues 17–59 (CDSCVKRRARWYCAADDAFLCQSCDSLVHSANPLARRHERVRL). Residues 63-105 (SPAVVKHSNHSSASPPHEVATWHHGFTRKARTPRGSGKKNNSS) are disordered. The stretch at 212 to 239 (LSNSEMFKIEKDEIEEEVEEIKAMSMDI) forms a coiled coil. In terms of domain architecture, CCT spans 361–403 (REARVSRYREKRRTRLFSKKIRYEVRKLNAEKRPRMKGRFVKR).

The protein belongs to the CONSTANS family.

It is found in the nucleus. This is Zinc finger protein CONSTANS-LIKE 16 (COL16) from Arabidopsis thaliana (Mouse-ear cress).